A 639-amino-acid chain; its full sequence is UvrABC system protein C (639 aa).

A GIY-YIG domain is found at 20–97; it reads ERSGVYRMFD…IKKFQPKFNI (78 aa). Residues 207–242 form the UVR domain; that stretch reads KELQENLSRKMEELSSQMRFEEAAEIRDRIKALSYV.

The protein belongs to the UvrC family. Interacts with UvrB in an incision complex.

The protein resides in the cytoplasm. In terms of biological role, the UvrABC repair system catalyzes the recognition and processing of DNA lesions. UvrC both incises the 5' and 3' sides of the lesion. The N-terminal half is responsible for the 3' incision and the C-terminal half is responsible for the 5' incision. This is UvrABC system protein C from Rickettsia rickettsii (strain Iowa).